The following is a 609-amino-acid chain: Major facilitator superfamily domain-containing protein 6-like protein A (609 aa).

2 helical membrane-spanning segments follow: residues 41–61 (LGLGAPLVGIIFGFKHAVHLL) and 78–98 (FFIMTSLLLSAGVGSLFAYYP). Positions 201 to 241 (SGKAQKVMSSKSAASNSKQRSSLNNHTSPYATHPNVSHHPS) are disordered. The segment covering 207–230 (VMSSKSAASNSKQRSSLNNHTSPY) has biased composition (polar residues). 9 helical membrane-spanning segments follow: residues 265–285 (IFLIVLVLVIIWEILAAPLEW), 307–327 (LWIWGYLGASMGSIFITFLVD), 340–360 (VFFHFFCYGGFLIGTLFLSTL), 388–408 (IVLTALTVFLLGAVGSTTQNF), 420–440 (ELYMGLSIAVGLLSELTLYFF), 452–472 (WMVALGLFSLGVQCLYYSFLW), 475–495 (WSVLAIQILNAFSSGVIWWAI), 513–535 (LALRWLAYGCGSSTGSFASGFII), and 541–561 (AVLYQACCITLLLWIIIFLLV).

The protein belongs to the major facilitator superfamily. MFSD6 family.

It is found in the membrane. In Xenopus laevis (African clawed frog), this protein is Major facilitator superfamily domain-containing protein 6-like protein A (mfsd6l-a).